The chain runs to 155 residues: SsrA-binding protein (155 aa).

Residues 135–147 (TIKRRDQERDIKK) show a composition bias toward basic and acidic residues. Residues 135–155 (TIKRRDQERDIKKQMKHYNAR) form a disordered region.

Belongs to the SmpB family.

It localises to the cytoplasm. Functionally, required for rescue of stalled ribosomes mediated by trans-translation. Binds to transfer-messenger RNA (tmRNA), required for stable association of tmRNA with ribosomes. tmRNA and SmpB together mimic tRNA shape, replacing the anticodon stem-loop with SmpB. tmRNA is encoded by the ssrA gene; the 2 termini fold to resemble tRNA(Ala) and it encodes a 'tag peptide', a short internal open reading frame. During trans-translation Ala-aminoacylated tmRNA acts like a tRNA, entering the A-site of stalled ribosomes, displacing the stalled mRNA. The ribosome then switches to translate the ORF on the tmRNA; the nascent peptide is terminated with the 'tag peptide' encoded by the tmRNA and targeted for degradation. The ribosome is freed to recommence translation, which seems to be the essential function of trans-translation. The chain is SsrA-binding protein from Streptococcus pyogenes serotype M6 (strain ATCC BAA-946 / MGAS10394).